The primary structure comprises 382 residues: MSTYTRPVMLLLSGLLLLTLAIAVLNTLVPLWLAQEHMSTWQVGVVSSSYFTGNLVGTLLTGYVIKRIGFNRSYYLASFIFAAGCAGLGLMIGFWSWLAWRFVAGIGCAMIWVVVESALMCSGTSRNRGRLLAAYMMVYYVGTFLGQLLVSKVSTELMSVLPWVTGLTLAGILPLLFTHVLNQQAENHDSTSITSMLKLRQARLGVNGCIISGIVLGSLYGLMPLYLNHKGVSNASIGFWMAVLVSAGILGQWPIGRLADKFGRLLVLRVQVFVVILGSIAMLSQAAMAPALFILGAAGFTLYPVAMAWACEKVEHHQLVAMNQALLLSYTVGSLLGPSFTAMLMQNFSDNLLFIMIASVSFIYLLMLLRNAGHTPKPVAHV.

Transmembrane regions (helical) follow at residues 14–34 (GLLLLTLAIAVLNTLVPLWLA), 45–65 (VVSSSYFTGNLVGTLLTGYVI), 79–99 (FIFAAGCAGLGLMIGFWSWLA), 102–122 (FVAGIGCAMIWVVVESALMCS), 131–151 (LLAAYMMVYYVGTFLGQLLVS), 157–177 (LMSVLPWVTGLTLAGILPLLF), 204–224 (LGVNGCIISGIVLGSLYGLMP), 235–255 (ASIGFWMAVLVSAGILGQWPI), 270–290 (VQVFVVILGSIAMLSQAAMAP), 291–311 (ALFILGAAGFTLYPVAMAWAC), 325–345 (ALLLSYTVGSLLGPSFTAMLM), and 348–368 (FSDNLLFIMIASVSFIYLLML).

It belongs to the major facilitator superfamily. YcaD (TC 2.A.1.26) family.

The protein resides in the cell inner membrane. This is an uncharacterized protein from Escherichia coli O45:K1 (strain S88 / ExPEC).